A 47-amino-acid chain; its full sequence is Laccase-2d (47 aa).

Residues 2–47 (TGPVADLHIINKDLSPDGFQRPTVVAGGGRDVVSIGRAGDNVTIRF) enclose the Plastocyanin-like domain.

This sequence belongs to the multicopper oxidase family. In terms of assembly, homodimer. It depends on Cu cation as a cofactor. Post-translationally, N-glycosylated; contains 17% carbohydrates.

Its subcellular location is the secreted. The enzyme catalyses 4 hydroquinone + O2 = 4 benzosemiquinone + 2 H2O. Inhibited by sodium azide, SDS and mercaptoethanol, but not by 4-hexyl resocinol, L-cysteine and dithiothreitol. Activity is inhibited by the heavy metal ions Cr, W, Sn, Ag(+) and Hg(2+), but not by Pb(2+), Fe(3+), Ni(2+), Li(2+), Co(2+) or Cd(2+). Functionally, lignin degradation and detoxification of lignin-derived products. Has highest activity towards ABTS, also active towards ferulic acid and guaiacol, but is not active towards tyrosine, vanillic acid, 2,5-dimethyl aniline, p-anisidine or violuric acid. This is Laccase-2d from Cerrena unicolor (Canker rot fungus).